A 351-amino-acid chain; its full sequence is Uroporphyrinogen decarboxylase (351 aa).

Residues 32–36 (RQAGR), Phe-51, Asp-82, Tyr-157, Ser-211, and His-326 contribute to the substrate site.

It belongs to the uroporphyrinogen decarboxylase family. As to quaternary structure, homodimer.

Its subcellular location is the cytoplasm. It carries out the reaction uroporphyrinogen III + 4 H(+) = coproporphyrinogen III + 4 CO2. Its pathway is porphyrin-containing compound metabolism; protoporphyrin-IX biosynthesis; coproporphyrinogen-III from 5-aminolevulinate: step 4/4. Its function is as follows. Catalyzes the decarboxylation of four acetate groups of uroporphyrinogen III to yield coproporphyrinogen III. The polypeptide is Uroporphyrinogen decarboxylase (Caulobacter vibrioides (strain ATCC 19089 / CIP 103742 / CB 15) (Caulobacter crescentus)).